Consider the following 337-residue polypeptide: Probable E3 ubiquitin-protein ligase LUL1 (337 aa).

The N-myristoyl glycine moiety is linked to residue Gly-2. The interval 139–255 (FTFDASMPGR…GEIKIEVVKQ (117 aa)) is DAR2 domain. The segment at 285-324 (CVVCLSEPRDTTVLPCRHMCMCSGCAKALRFQTNLCPVCR) adopts an RING-type; atypical zinc-finger fold.

It belongs to the RING-type zinc finger family. LOG2 subfamily. In terms of processing, myristoylated (in vitro).

The enzyme catalyses S-ubiquitinyl-[E2 ubiquitin-conjugating enzyme]-L-cysteine + [acceptor protein]-L-lysine = [E2 ubiquitin-conjugating enzyme]-L-cysteine + N(6)-ubiquitinyl-[acceptor protein]-L-lysine.. It participates in protein modification; protein ubiquitination. Functionally, acts as an E3 ubiquitin-protein ligase, or as part of E3 complex, which accepts ubiquitin from specific E2 ubiquitin-conjugating enzymes and then transfers it to substrates (in vitro). The sequence is that of Probable E3 ubiquitin-protein ligase LUL1 (LUL1) from Arabidopsis thaliana (Mouse-ear cress).